Reading from the N-terminus, the 446-residue chain is WD repeat domain phosphoinositide-interacting protein 1 (446 aa).

WD repeat units lie at residues 3–42 (AEAA…LFSL), 47–88 (QLDQ…VYHF), 92–126 (TEIC…IHNI), 131–173 (LLKT…LYDG), 177–216 (KTVC…VFSV), 222–261 (LYEF…IFKL), and 304–343 (FATA…MYNL). Positions 131–136 (LLKTLL) match the Nuclear receptor interaction motif. A L/FRRG motif motif is present at residues 225–228 (FRRG). The disordered stretch occupies residues 386 to 406 (ARPSASSASTVPGYSEDGGAL).

The protein belongs to the WD repeat PROPPIN family. In terms of assembly, interacts with androgen receptor (AR) and the estrogen receptors ESR1 and ESR2. Interacts with WIPI2. Interacts with WDR45. Interacts with ATG16L1. May interact with NUDC. Ubiquitously expressed. Highly expressed in skeletal muscle, heart, testis, pancreas and placenta. Highly expressed in G361, Sk-mel-28, Sk-mel-13, WM852 and WM451 cells. Up-regulated in a variety of tumor tissues.

The protein resides in the golgi apparatus. The protein localises to the trans-Golgi network. It is found in the endosome. Its subcellular location is the cytoplasmic vesicle. It localises to the clathrin-coated vesicle. The protein resides in the preautophagosomal structure membrane. The protein localises to the cytoplasm. It is found in the cytoskeleton. Component of the autophagy machinery that controls the major intracellular degradation process by which cytoplasmic materials are packaged into autophagosomes and delivered to lysosomes for degradation. Plays an important role in starvation- and calcium-mediated autophagy, as well as in mitophagy. Functions downstream of the ULK1 and PI3-kinases that produce phosphatidylinositol 3-phosphate (PtdIns3P) on membranes of the endoplasmic reticulum once activated. Binds phosphatidylinositol 3-phosphate (PtdIns3P), and maybe other phosphoinositides including PtdIns3,5P2 and PtdIns5P, and is recruited to phagophore assembly sites at the endoplasmic reticulum membranes. There, it assists WIPI2 in the recruitment of ATG12-ATG5-ATG16L1, a complex that directly controls the elongation of the nascent autophagosomal membrane. Together with WDR45/WIPI4, promotes ATG2 (ATG2A or ATG2B)-mediated lipid transfer by enhancing ATG2-association with phosphatidylinositol 3-monophosphate (PI3P)-containing membranes. Involved in xenophagy of Staphylococcus aureus. Invading S.aureus cells become entrapped in autophagosome-like WIPI1 positive vesicles targeted for lysosomal degradation. Also plays a distinct role in controlling the transcription of melanogenic enzymes and melanosome maturation, a process that is distinct from starvation-induced autophagy. May also regulate the trafficking of proteins involved in the mannose-6-phosphate receptor (MPR) recycling pathway. This chain is WD repeat domain phosphoinositide-interacting protein 1 (WIPI1), found in Homo sapiens (Human).